A 109-amino-acid polypeptide reads, in one-letter code: Nascent polypeptide-associated complex protein (109 aa).

The region spanning 3 to 70 (PMNPKQMKKM…YEVVKRPPKI (68 aa)) is the NAC-A/B domain.

It belongs to the NAC-alpha family. As to quaternary structure, homodimer. Interacts with the ribosome. Binds ribosomal RNA.

Its function is as follows. Contacts the emerging nascent chain on the ribosome. In Archaeoglobus fulgidus (strain ATCC 49558 / DSM 4304 / JCM 9628 / NBRC 100126 / VC-16), this protein is Nascent polypeptide-associated complex protein.